A 417-amino-acid chain; its full sequence is UDP-N-acetylglucosamine 1-carboxyvinyltransferase (417 aa).

22–23 (KN) provides a ligand contact to phosphoenolpyruvate. Arg-93 is a UDP-N-acetyl-alpha-D-glucosamine binding site. Residue Cys-117 is the Proton donor of the active site. Position 117 is a 2-(S-cysteinyl)pyruvic acid O-phosphothioketal (Cys-117). UDP-N-acetyl-alpha-D-glucosamine-binding positions include 122–126 (RPVDQ), Asp-305, and Ile-327.

Belongs to the EPSP synthase family. MurA subfamily.

The protein localises to the cytoplasm. The catalysed reaction is phosphoenolpyruvate + UDP-N-acetyl-alpha-D-glucosamine = UDP-N-acetyl-3-O-(1-carboxyvinyl)-alpha-D-glucosamine + phosphate. Its pathway is cell wall biogenesis; peptidoglycan biosynthesis. Functionally, cell wall formation. Adds enolpyruvyl to UDP-N-acetylglucosamine. This Nitrosomonas eutropha (strain DSM 101675 / C91 / Nm57) protein is UDP-N-acetylglucosamine 1-carboxyvinyltransferase.